A 65-amino-acid chain; its full sequence is Protein translocase subunit SecE (65 aa).

Topologically, residues 1–34 are cytoplasmic; sequence MEKLRKFFREVIAEAKKISWPSRKELLTSFGVVL. Residues 35–51 traverse the membrane as a helical segment; that stretch reads VILAVTSVYFFVLDFIF. At 52–65 the chain is on the extracellular side; sequence SGVVSAIFKALGIG.

It belongs to the SecE/SEC61-gamma family. Component of the Sec protein translocase complex. Heterotrimer consisting of SecY, SecE and SecG subunits. The heterotrimers can form oligomers, although 1 heterotrimer is thought to be able to translocate proteins. Interacts with SecDF, and other proteins may be involved. The channel interacts with SecA via subunit SecY.

It is found in the cell inner membrane. In terms of biological role, essential subunit of the protein translocation channel SecYEG. Clamps together the 2 halves of SecY. May contact the channel plug during translocation. The chain is Protein translocase subunit SecE from Thermotoga maritima (strain ATCC 43589 / DSM 3109 / JCM 10099 / NBRC 100826 / MSB8).